The primary structure comprises 131 residues: Ribonuclease VapC3 (131 aa).

The PINc domain maps to 4–121; sequence VVDASAIAAL…GKLLTLDRQL (118 aa). Residues D6, D100, and D118 each coordinate Mg(2+).

It belongs to the PINc/VapC protein family. As to quaternary structure, homodimer. Forms a complex with putative antitoxin VapB3, possibly VapB(2)-VapC(2). Mg(2+) serves as cofactor.

With respect to regulation, inhibited by EDTA. Its function is as follows. Toxic component of a type II toxin-antitoxin (TA) system. Has ribonuclease activity. The sequence is that of Ribonuclease VapC3 from Pyrobaculum aerophilum (strain ATCC 51768 / DSM 7523 / JCM 9630 / CIP 104966 / NBRC 100827 / IM2).